The chain runs to 203 residues: Small ribosomal subunit protein uS4c (203 aa).

Residues Pro19–Gln43 form a disordered region. The region spanning Met89–Leu152 is the S4 RNA-binding domain.

The protein belongs to the universal ribosomal protein uS4 family. Part of the 30S ribosomal subunit. Contacts protein S5. The interaction surface between S4 and S5 is involved in control of translational fidelity.

The protein localises to the plastid. Its subcellular location is the chloroplast. Functionally, one of the primary rRNA binding proteins, it binds directly to 16S rRNA where it nucleates assembly of the body of the 30S subunit. In terms of biological role, with S5 and S12 plays an important role in translational accuracy. This is Small ribosomal subunit protein uS4c (rps4) from Jasminum nudiflorum (Winter jasmine).